Consider the following 536-residue polypeptide: Copine-1 (536 aa).

2 consecutive C2 domains span residues 1-113 (MAHC…TLPL) and 122-244 (GRGT…ECIH). Residues Asp-21, Asp-27, Asp-79, Asp-81, Asp-91, Asp-152, and Asp-158 each coordinate Ca(2+). An N6-acetyllysine modification is found at Lys-170. Asp-213, Asp-215, and Asp-221 together coordinate Ca(2+). The region spanning 282-484 (QINFTVGVDF…AARDIVQFVP (203 aa)) is the VWFA domain.

The protein belongs to the copine family. Homodimer; homodimerizes via its C2 domains. Interacts with p65/RELA (via N-terminus); this interaction induces proteolytic cleavage of p65/RELA subunit and inhibition of NF-kappa-B transcriptional activity. Interacts (via VWFA domain) with ACTB, CCDC22, MYCBP2, PPP5C, RDX and UBE2O. Requires Ca(2+) as cofactor. As to expression, expressed in liver, brain, heart, intestine, kidney and lung (at protein level).

The protein localises to the nucleus. The protein resides in the cytoplasm. Its subcellular location is the cell membrane. Functionally, calcium-dependent phospholipid-binding protein that plays a role in calcium-mediated intracellular processes. Involved in the TNF-alpha receptor signaling pathway in a calcium-dependent manner. Exhibits calcium-dependent phospholipid binding properties. Plays a role in neuronal progenitor cell differentiation; induces neurite outgrowth via a AKT-dependent signaling cascade and calcium-independent manner. May recruit target proteins to the cell membrane in a calcium-dependent manner. May function in membrane trafficking. Involved in TNF-alpha-induced NF-kappa-B transcriptional repression by inducing endoprotease processing of the transcription factor NF-kappa-B p65/RELA subunit. Also induces endoprotease processing of NF-kappa-B p50/NFKB1, p52/NFKB2, RELB and REL. This is Copine-1 from Rattus norvegicus (Rat).